We begin with the raw amino-acid sequence, 362 residues long: RNA-binding protein 48 (362 aa).

Residues 46–124 (WYLLIQGVPA…GLLHVCYAPE (79 aa)) form the RRM domain. The interval 334–362 (EVISSVPKPPEDKVEDVHRSRPLKQRRRI) is disordered. Residues 342-352 (PPEDKVEDVHR) are compositionally biased toward basic and acidic residues. The segment covering 353–362 (SRPLKQRRRI) has biased composition (basic residues).

It belongs to the RBM48 family. In terms of assembly, component of the minor spliceosome. Within this complex, interacts with ARMC7 and PRPF8/PRP8.

As a component of the minor spliceosome, involved in the splicing of U12-type introns in pre-mRNAs. This is RNA-binding protein 48 (RBM48) from Bos taurus (Bovine).